The following is a 400-amino-acid chain: Phosphoglycerate kinase (400 aa).

Residues 24-26 (DFN), Arg40, 63-66 (HFGR), Arg121, and Arg154 contribute to the substrate site. ATP is bound by residues Lys205, Gly296, Glu327, and 356-359 (GGDS).

As to quaternary structure, monomer.

The protein localises to the cytoplasm. The enzyme catalyses (2R)-3-phosphoglycerate + ATP = (2R)-3-phospho-glyceroyl phosphate + ADP. It participates in carbohydrate degradation; glycolysis; pyruvate from D-glyceraldehyde 3-phosphate: step 2/5. The polypeptide is Phosphoglycerate kinase (Nostoc sp. (strain PCC 7120 / SAG 25.82 / UTEX 2576)).